The following is a 144-amino-acid chain: Large ribosomal subunit protein uL16 (144 aa).

Residues 1–16 (MLTPKRVKHRKQHRGK) are compositionally biased toward basic residues. The tract at residues 1 to 22 (MLTPKRVKHRKQHRGKMAGNAK) is disordered.

It belongs to the universal ribosomal protein uL16 family. Part of the 50S ribosomal subunit.

Its function is as follows. Binds 23S rRNA and is also seen to make contacts with the A and possibly P site tRNAs. This Brevibacillus brevis (strain 47 / JCM 6285 / NBRC 100599) protein is Large ribosomal subunit protein uL16.